The chain runs to 49 residues: Photosystem II reaction center protein K (49 aa).

Residues 1–12 (MISSIHLRKLLG) constitute a propeptide that is removed on maturation. Residues 24–44 (IIDVLPIIPVLFLLLAFVWQA) form a helical membrane-spanning segment.

It belongs to the PsbK family. As to quaternary structure, PSII is composed of 1 copy each of membrane proteins PsbA, PsbB, PsbC, PsbD, PsbE, PsbF, PsbH, PsbI, PsbJ, PsbK, PsbL, PsbM, PsbT, PsbX, PsbY, PsbZ, Psb30/Ycf12, at least 3 peripheral proteins of the oxygen-evolving complex and a large number of cofactors. It forms dimeric complexes.

The protein localises to the plastid. It is found in the chloroplast thylakoid membrane. Its function is as follows. One of the components of the core complex of photosystem II (PSII). PSII is a light-driven water:plastoquinone oxidoreductase that uses light energy to abstract electrons from H(2)O, generating O(2) and a proton gradient subsequently used for ATP formation. It consists of a core antenna complex that captures photons, and an electron transfer chain that converts photonic excitation into a charge separation. The polypeptide is Photosystem II reaction center protein K (Phacus acuminatus).